Reading from the N-terminus, the 197-residue chain is LexA repressor (197 aa).

The segment at residues 28–47 (VREIARRFRITPRGAQLHLV) is a DNA-binding region (H-T-H motif). Catalysis depends on for autocatalytic cleavage activity residues Ser-119 and Lys-156.

The protein belongs to the peptidase S24 family. As to quaternary structure, homodimer.

It catalyses the reaction Hydrolysis of Ala-|-Gly bond in repressor LexA.. Represses a number of genes involved in the response to DNA damage (SOS response), including recA and lexA. In the presence of single-stranded DNA, RecA interacts with LexA causing an autocatalytic cleavage which disrupts the DNA-binding part of LexA, leading to derepression of the SOS regulon and eventually DNA repair. In Thermotoga neapolitana, this protein is LexA repressor.